A 728-amino-acid polypeptide reads, in one-letter code: Polyribonucleotide nucleotidyltransferase (728 aa).

Residues aspartate 509 and aspartate 515 each contribute to the Mg(2+) site. The KH domain maps to 576–638; it reads TKIYTFYIPK…TKLKIAILKI (63 aa). In terms of domain architecture, S1 motif spans 648 to 715; it reads GTIYKAKVKN…KFRKIKLSHK (68 aa).

The protein belongs to the polyribonucleotide nucleotidyltransferase family. The cofactor is Mg(2+).

It localises to the cytoplasm. It catalyses the reaction RNA(n+1) + phosphate = RNA(n) + a ribonucleoside 5'-diphosphate. Its function is as follows. Involved in mRNA degradation. Catalyzes the phosphorolysis of single-stranded polyribonucleotides processively in the 3'- to 5'-direction. This Karelsulcia muelleri (strain GWSS) (Sulcia muelleri) protein is Polyribonucleotide nucleotidyltransferase.